The following is a 168-amino-acid chain: NADH-quinone oxidoreductase subunit E 2 (168 aa).

Residues C77, C82, C118, and C122 each contribute to the [2Fe-2S] cluster site.

It belongs to the complex I 24 kDa subunit family. [2Fe-2S] cluster is required as a cofactor.

The catalysed reaction is a quinone + NADH + 5 H(+)(in) = a quinol + NAD(+) + 4 H(+)(out). NDH-1 shuttles electrons from NADH, via FMN and iron-sulfur (Fe-S) centers, to quinones in the respiratory chain. The immediate electron acceptor for the enzyme in this species is believed to be ubiquinone. Couples the redox reaction to proton translocation (for every two electrons transferred, four hydrogen ions are translocated across the cytoplasmic membrane), and thus conserves the redox energy in a proton gradient. This chain is NADH-quinone oxidoreductase subunit E 2 (nuoE2), found in Rhizobium meliloti (strain 1021) (Ensifer meliloti).